A 257-amino-acid chain; its full sequence is Asnovolin H dehydrogenase nvfC (257 aa).

The chain crosses the membrane as a helical span at residues 7–26 (YVLIITGSASGIGLATATIA). Residue isoleucine 11 participates in NADP(+) binding. Residues asparagine 57, asparagine 92, and asparagine 110 are each glycosylated (N-linked (GlcNAc...) asparagine). Residues arginine 119, tyrosine 151, lysine 155, and valine 184 each contribute to the NADP(+) site. Tyrosine 151 functions as the Proton donor in the catalytic mechanism. The active-site Lowers pKa of active site Tyr is the lysine 155.

This sequence belongs to the short-chain dehydrogenases/reductases (SDR) family.

The protein localises to the membrane. The enzyme catalyses asnovolin H + A = chermesin D + AH2. It functions in the pathway secondary metabolite biosynthesis; terpenoid biosynthesis. Functionally, short chain dehydrogenase; part of the gene cluster that mediates the biosynthesis of novofumigatonin, a heavily oxygenated meroterpenoid containing a unique orthoester moiety. The first step of the pathway is the synthesis of 3,5-dimethylorsellinic acid (DMOA) by the polyketide synthase nvfA via condensation of one acetyl-CoA starter unit with 3 malonyl-CoA units and 2 methylations. DMOA is then converted to farnesyl-DMOA by the farnesyltransferase nvfB. Epoxydation by FAD-dependent monooxygenase nvfK, followed by a protonation-initiated cyclization catalyzed by the terpene cyclase nvfL leads to the production of asnavolin H. The short chain dehydrogenase nvfC then as a 3-OH dehydrogenase of asnovolin H to yield chemesin D. There are two branches to synthesize asnovolin A from chemesin D. In one branch, chemesin D undergoes Baeyer-Villiger oxidation by nvfH, methylation by nvfJ, and enoyl reduction by the nvfM D enoylreductase that reduces the double bond between C-5'and C-6', to form respectively asnovolin I, asnovolin K, and asnovolin A. In the other branch, the methylation precedes the Baeyer-Villiger oxidation and the enoyl reduction to yield asnovolin A via the asnovolin J intermediate. Asnovolin A is further converted to fumigatonoid A by the Fe(II)/2-oxoglutarate-dependent dioxygenase nvfI that catalyzes an endoperoxidation reaction. The alpha/beta hydrolase nvfD then acts as an epimerase that converts fumigatonoid A to its C-5' epimer, which then undergoes spontaneous or nvfD-catalyzed lactonization. The following step utilizes the ketoreductase nvfG to produce fumigatonoid B. The dioxygenase nvfE further converts fumigatonoid B into fumigatonoid C. Finally the Fe(II)/2-oxoglutarate-dependent dioxygenase nvfF catalyzes two rounds of oxidation to transform fumigatonoid C into the end product, novofumigatonin A. This Aspergillus novofumigatus (strain IBT 16806) protein is Asnovolin H dehydrogenase nvfC.